Reading from the N-terminus, the 396-residue chain is Elongation factor Tu (396 aa).

Residues 10–206 (KPHVNVGTIG…ALDSYIPEPE (197 aa)) enclose the tr-type G domain. Positions 19 to 26 (GHVDHGKT) are G1. Position 19 to 26 (19 to 26 (GHVDHGKT)) interacts with GTP. Thr-26 is a binding site for Mg(2+). A G2 region spans residues 60–64 (GITIN). The segment at 81-84 (DCPG) is G3. Residues 81 to 85 (DCPGH) and 136 to 139 (NKCD) contribute to the GTP site. The tract at residues 136 to 139 (NKCD) is G4. The G5 stretch occupies residues 174-176 (SAL).

The protein belongs to the TRAFAC class translation factor GTPase superfamily. Classic translation factor GTPase family. EF-Tu/EF-1A subfamily. As to quaternary structure, monomer.

It is found in the cytoplasm. It carries out the reaction GTP + H2O = GDP + phosphate + H(+). Its function is as follows. GTP hydrolase that promotes the GTP-dependent binding of aminoacyl-tRNA to the A-site of ribosomes during protein biosynthesis. This Acinetobacter baumannii (strain ATCC 17978 / DSM 105126 / CIP 53.77 / LMG 1025 / NCDC KC755 / 5377) protein is Elongation factor Tu.